A 302-amino-acid polypeptide reads, in one-letter code: ATP synthase gamma chain (302 aa).

Belongs to the ATPase gamma chain family. As to quaternary structure, F-type ATPases have 2 components, CF(1) - the catalytic core - and CF(0) - the membrane proton channel. CF(1) has five subunits: alpha(3), beta(3), gamma(1), delta(1), epsilon(1). CF(0) has three main subunits: a, b and c.

The protein resides in the cell inner membrane. In terms of biological role, produces ATP from ADP in the presence of a proton gradient across the membrane. The gamma chain is believed to be important in regulating ATPase activity and the flow of protons through the CF(0) complex. This is ATP synthase gamma chain from Bartonella bacilliformis (strain ATCC 35685 / KC583 / Herrer 020/F12,63).